The chain runs to 453 residues: Homogentisate 1,2-dioxygenase (453 aa).

His-304 acts as the Proton acceptor in catalysis. Residues His-347 and Glu-353 each coordinate Fe cation. Residues Tyr-362 and His-383 each coordinate homogentisate. Residue His-383 coordinates Fe cation.

Belongs to the homogentisate dioxygenase family. As to quaternary structure, hexamer; dimer of trimers. It depends on Fe cation as a cofactor.

It catalyses the reaction homogentisate + O2 = 4-maleylacetoacetate + H(+). It functions in the pathway amino-acid degradation; L-phenylalanine degradation; acetoacetate and fumarate from L-phenylalanine: step 4/6. In terms of biological role, involved in the catabolism of homogentisate (2,5-dihydroxyphenylacetate or 2,5-OH-PhAc), a central intermediate in the degradation of phenylalanine and tyrosine. Catalyzes the oxidative ring cleavage of the aromatic ring of homogentisate to yield maleylacetoacetate. This chain is Homogentisate 1,2-dioxygenase, found in Sinorhizobium fredii (strain NBRC 101917 / NGR234).